Reading from the N-terminus, the 100-residue chain is Urease subunit gamma (100 aa).

The protein belongs to the urease gamma subunit family. In terms of assembly, heterotrimer of UreA (gamma), UreB (beta) and UreC (alpha) subunits. Three heterotrimers associate to form the active enzyme.

It is found in the cytoplasm. It catalyses the reaction urea + 2 H2O + H(+) = hydrogencarbonate + 2 NH4(+). Its pathway is nitrogen metabolism; urea degradation; CO(2) and NH(3) from urea (urease route): step 1/1. This Allorhizobium ampelinum (strain ATCC BAA-846 / DSM 112012 / S4) (Agrobacterium vitis (strain S4)) protein is Urease subunit gamma.